The primary structure comprises 798 residues: Phenylalanine--tRNA ligase beta subunit (798 aa).

The tRNA-binding domain maps to 39 to 148 (FDAIEPIVVG…ESFRIGARLV (110 aa)). One can recognise a B5 domain in the interval 402 to 478 (WQAPVLRFRR…RVRGMDTIEP (77 aa)). Mg(2+) is bound by residues aspartate 456, aspartate 462, glutamate 465, and glutamate 466. The FDX-ACB domain occupies 708 to 798 (PVYPPVRRDI…SLVEKLPVRI (91 aa)).

This sequence belongs to the phenylalanyl-tRNA synthetase beta subunit family. Type 1 subfamily. Tetramer of two alpha and two beta subunits. It depends on Mg(2+) as a cofactor.

The protein localises to the cytoplasm. The enzyme catalyses tRNA(Phe) + L-phenylalanine + ATP = L-phenylalanyl-tRNA(Phe) + AMP + diphosphate + H(+). The chain is Phenylalanine--tRNA ligase beta subunit from Nitratidesulfovibrio vulgaris (strain ATCC 29579 / DSM 644 / CCUG 34227 / NCIMB 8303 / VKM B-1760 / Hildenborough) (Desulfovibrio vulgaris).